The chain runs to 428 residues: Methyl-branched lipid omega-hydroxylase (428 aa).

Cys379 lines the heme pocket.

This sequence belongs to the cytochrome P450 family. Requires heme as cofactor.

The catalysed reaction is a methyl-branched lipid + O2 + 2 reduced ferredoxin [iron-sulfur] cluster + 2 H(+) = an omega-hydroxy-methyl-branched lipid + H2O + 2 oxidized ferredoxin [iron-sulfur] cluster.. It carries out the reaction cholest-4-en-3-one + 6 reduced [2Fe-2S]-[ferredoxin] + 3 O2 + 5 H(+) = (25R)-3-oxocholest-4-en-26-oate + 6 oxidized [2Fe-2S]-[ferredoxin] + 4 H2O. It participates in lipid metabolism; branched-chain fatty acid metabolism. In terms of biological role, primarily hydroxylates the omega-carbon of a number of methyl-branched lipids, including (2E,6E)-farnesol, phytanate, geranylgeraniol, 15-methylpalmitate and (2E,6E)-farnesyl diphosphate. Also catalyzes the sequential oxidation of the terminal methyl of cholest-4-en-3-one into (25R)-26-hydroxycholest-4-en-3-one (alcohol), (25R)-26-oxocholest-4-en-3-one (aldehyde), to finally yield the carboxylic acid (25R)-3-oxocholest-4-en-26-oate. Also able to sequentially oxidize cholesterol itself, not only cholest-4-en-3-one. This Mycobacterium bovis (strain ATCC BAA-935 / AF2122/97) protein is Methyl-branched lipid omega-hydroxylase (cyp124).